Consider the following 448-residue polypeptide: tRNA(Ile)-lysidine synthase (448 aa).

Position 27–32 (27–32) interacts with ATP; that stretch reads SGGVDS.

The protein belongs to the tRNA(Ile)-lysidine synthase family.

Its subcellular location is the cytoplasm. It carries out the reaction cytidine(34) in tRNA(Ile2) + L-lysine + ATP = lysidine(34) in tRNA(Ile2) + AMP + diphosphate + H(+). Its function is as follows. Ligates lysine onto the cytidine present at position 34 of the AUA codon-specific tRNA(Ile) that contains the anticodon CAU, in an ATP-dependent manner. Cytidine is converted to lysidine, thus changing the amino acid specificity of the tRNA from methionine to isoleucine. This is tRNA(Ile)-lysidine synthase from Vibrio campbellii (strain ATCC BAA-1116).